A 284-amino-acid chain; its full sequence is Bifunctional protein FolD (284 aa).

NADP(+) is bound at residue 166-168 (GAS).

Belongs to the tetrahydrofolate dehydrogenase/cyclohydrolase family. Homodimer.

The enzyme catalyses (6R)-5,10-methylene-5,6,7,8-tetrahydrofolate + NADP(+) = (6R)-5,10-methenyltetrahydrofolate + NADPH. The catalysed reaction is (6R)-5,10-methenyltetrahydrofolate + H2O = (6R)-10-formyltetrahydrofolate + H(+). The protein operates within one-carbon metabolism; tetrahydrofolate interconversion. Its function is as follows. Catalyzes the oxidation of 5,10-methylenetetrahydrofolate to 5,10-methenyltetrahydrofolate and then the hydrolysis of 5,10-methenyltetrahydrofolate to 10-formyltetrahydrofolate. The chain is Bifunctional protein FolD from Legionella pneumophila (strain Corby).